Reading from the N-terminus, the 205-residue chain is Small ribosomal subunit protein uS4B (205 aa).

In terms of domain architecture, S4 RNA-binding spans 94–157; that stretch reads RRLDNVVFRA…LNLPIVLGTL (64 aa).

This sequence belongs to the universal ribosomal protein uS4 family. Part of the 30S ribosomal subunit. Contacts protein S5. The interaction surface between S4 and S5 is involved in control of translational fidelity.

Functionally, one of the primary rRNA binding proteins, it binds directly to 16S rRNA where it nucleates assembly of the body of the 30S subunit. In terms of biological role, with S5 and S12 plays an important role in translational accuracy. The sequence is that of Small ribosomal subunit protein uS4B from Nitrosomonas europaea (strain ATCC 19718 / CIP 103999 / KCTC 2705 / NBRC 14298).